Reading from the N-terminus, the 311-residue chain is Replication initiation protein (311 aa).

The protein belongs to the plasmid replication initiation factor family.

In terms of biological role, this protein is probably a specific topoisomerase involved in initiating replication. This protein is specifically required and may be rate-limiting for replication of the plasmid in vivo. This is Replication initiation protein (repD) from Staphylococcus aureus.